The sequence spans 133 residues: uncharacterized protein (133 aa).

2 helical membrane-spanning segments follow: residues 13–33 (FLLSVVGSGNSLSILNGLFLS) and 73–93 (FGNPLVTSLNIMYSLFYLLLL).

It localises to the membrane. This is an uncharacterized protein from Saccharomyces cerevisiae (strain ATCC 204508 / S288c) (Baker's yeast).